We begin with the raw amino-acid sequence, 828 residues long: Translation initiation factor IF-2 (828 aa).

Disordered stretches follow at residues 48–76 (SYSGSTTTLSLNKEKGSLETGSSSGSEEF) and 112–137 (ASQEDPIEVEQEESSDTNKVKEEPKI). A compositionally biased stretch (polar residues) spans 49 to 58 (YSGSTTTLSL). Residues 65 to 74 (LETGSSSGSE) show a composition bias toward low complexity. Residues 116–126 (DPIEVEQEESS) show a composition bias toward acidic residues. Residues 127 to 137 (DTNKVKEEPKI) show a composition bias toward basic and acidic residues. The tr-type G domain occupies 326-496 (SRAPVVTVMG…LLIAEMQNLK (171 aa)). Residues 335 to 342 (GHVDHGKT) form a G1 region. 335 to 342 (GHVDHGKT) contacts GTP. The tract at residues 360-364 (GITQH) is G2. The interval 382 to 385 (DTPG) is G3. GTP is bound by residues 382 to 386 (DTPGH) and 436 to 439 (NKID). The interval 436–439 (NKID) is G4. The tract at residues 472-474 (SAL) is G5.

The protein belongs to the TRAFAC class translation factor GTPase superfamily. Classic translation factor GTPase family. IF-2 subfamily.

The protein localises to the cytoplasm. One of the essential components for the initiation of protein synthesis. Protects formylmethionyl-tRNA from spontaneous hydrolysis and promotes its binding to the 30S ribosomal subunits. Also involved in the hydrolysis of GTP during the formation of the 70S ribosomal complex. This Rickettsia bellii (strain RML369-C) protein is Translation initiation factor IF-2.